We begin with the raw amino-acid sequence, 163 residues long: NADH-quinone oxidoreductase subunit I (163 aa).

2 consecutive 4Fe-4S ferredoxin-type domains span residues 53–83 and 94–123; these read LRRYPNGEERCIACKLCEAICPAQAITIEAG and VRYDIDMVKCIYCGFCQEACPVDAIVEGPN. 8 residues coordinate [4Fe-4S] cluster: cysteine 63, cysteine 66, cysteine 69, cysteine 73, cysteine 103, cysteine 106, cysteine 109, and cysteine 113.

This sequence belongs to the complex I 23 kDa subunit family. In terms of assembly, NDH-1 is composed of 14 different subunits. Subunits NuoA, H, J, K, L, M, N constitute the membrane sector of the complex. [4Fe-4S] cluster is required as a cofactor.

Its subcellular location is the cell inner membrane. It carries out the reaction a quinone + NADH + 5 H(+)(in) = a quinol + NAD(+) + 4 H(+)(out). Functionally, NDH-1 shuttles electrons from NADH, via FMN and iron-sulfur (Fe-S) centers, to quinones in the respiratory chain. The immediate electron acceptor for the enzyme in this species is believed to be ubiquinone. Couples the redox reaction to proton translocation (for every two electrons transferred, four hydrogen ions are translocated across the cytoplasmic membrane), and thus conserves the redox energy in a proton gradient. This chain is NADH-quinone oxidoreductase subunit I, found in Brucella melitensis biotype 1 (strain ATCC 23456 / CCUG 17765 / NCTC 10094 / 16M).